The chain runs to 267 residues: MLKIGVVGCGAIASLITKALMSDRLNKAEVLAFYDGNLEKAEKLAMETGADFCRSLDELVSKDLDLIVECASVTAVEDTVIKSLNNGKDVIIMSVGALADKDLFLKLYKLAEKLGRKIYIPSGAIAGIDAVKSGSLGKISDVTLTTTKPVHGLKSALEEQGLNTDEIKEPKVVFEGTVFEAISKFPQNINVSVVLSLASRYPAKVKIIADPNAVVNRHEILVKGSIGTIKTCVENNPCRDNPKTSALAAYSVIRLIKDLSEPVRIGT.

2 residues coordinate NAD(+): Ala-124 and Asn-190. His-218 is an active-site residue.

Belongs to the L-aspartate dehydrogenase family.

It catalyses the reaction L-aspartate + NADP(+) + H2O = oxaloacetate + NH4(+) + NADPH + H(+). The enzyme catalyses L-aspartate + NAD(+) + H2O = oxaloacetate + NH4(+) + NADH + H(+). It functions in the pathway cofactor biosynthesis; NAD(+) biosynthesis; iminoaspartate from L-aspartate (dehydrogenase route): step 1/1. Its function is as follows. Specifically catalyzes the NAD or NADP-dependent dehydrogenation of L-aspartate to iminoaspartate. In Methanococcus maripaludis (strain C6 / ATCC BAA-1332), this protein is L-aspartate dehydrogenase.